The following is a 113-amino-acid chain: UPF0060 membrane protein CV_3485 (113 aa).

4 consecutive transmembrane segments (helical) span residues 12–32 (GLFVLTALAEIVGCYLPWLVL), 37–57 (SLWLLAPTTLALALFAWLLTL), 67–87 (AAYGGVYVTVAIAWLWLVDGV), and 91–111 (RWDALGCALALAGMAVIMLAP).

It belongs to the UPF0060 family.

It localises to the cell inner membrane. This chain is UPF0060 membrane protein CV_3485, found in Chromobacterium violaceum (strain ATCC 12472 / DSM 30191 / JCM 1249 / CCUG 213 / NBRC 12614 / NCIMB 9131 / NCTC 9757 / MK).